A 242-amino-acid chain; its full sequence is Large ribosomal subunit protein uL30x (242 aa).

The protein belongs to the universal ribosomal protein uL30 family.

This Arabidopsis thaliana (Mouse-ear cress) protein is Large ribosomal subunit protein uL30x (RPL7C).